The chain runs to 293 residues: Xylanase inhibitor protein XIP (293 aa).

The N-terminal stretch at 1-21 is a signal peptide; sequence MALRRLAALLSLAVLLSAGLA. The GH18 domain occupies 31–293; the sequence is GDTVIIWGRN…DKKTGFTAHL (263 aa). 2 cysteine pairs are disulfide-bonded: C50–C92 and C189–C218.

This sequence belongs to the glycosyl hydrolase 18 family. Xylanase inhibitor subfamily. Expressed in mature grain.

It localises to the secreted. In terms of biological role, fungal xylanase inhibitor. Possesses competitive inhibiting activity against several fungal endo-1,4-beta-D-xylanases belonging to glycoside hydrolase family 10 (GH10) and family 11 (GH11). May function in plant defense against secreted fungal pathogen xylanases. Is similar to class III chitinases, but does not exhibit chitinase activity. The chain is Xylanase inhibitor protein XIP from Oryza sativa subsp. japonica (Rice).